A 361-amino-acid chain; its full sequence is Alternative oxidase, mitochondrial (361 aa).

The chain crosses the membrane as a helical span at residues 156-178; the sequence is YLVRNVFLESVAGVPGMVAGMLR. Positions 164, 203, and 206 each coordinate Fe cation. A helical membrane pass occupies residues 218–240; the sequence is WFMRLAVLGAQGVFFNAMFLSYL. Positions 254, 309, and 312 each coordinate Fe cation. Residues 318-328 show a composition bias toward polar residues; that stretch reads TLGNLDQNSDP. The tract at residues 318-361 is disordered; it reads TLGNLDQNSDPNPYASKYDNPNVPHPRKDIKYLKPSGWEREEVM. Positions 343–361 are enriched in basic and acidic residues; the sequence is PRKDIKYLKPSGWEREEVM.

Belongs to the alternative oxidase family. Fe cation serves as cofactor.

Its subcellular location is the mitochondrion inner membrane. Functionally, catalyzes cyanide-resistant oxygen consumption. May increase respiration when the cytochrome respiratory pathway is restricted, or in response to low temperatures. The polypeptide is Alternative oxidase, mitochondrial (AOX1) (Venturia inaequalis (Apple scab fungus)).